The sequence spans 207 residues: Small ribosomal subunit protein uS4 (207 aa).

The segment at 31 to 55 (KCKLDSKPGQHGRTSGARTSDYGTQ) is disordered. A compositionally biased stretch (polar residues) spans 42–53 (GRTSGARTSDYG). Residues 97–160 (SRLDNVVYRM…KKQARIVEAL (64 aa)) enclose the S4 RNA-binding domain.

This sequence belongs to the universal ribosomal protein uS4 family. Part of the 30S ribosomal subunit. Contacts protein S5. The interaction surface between S4 and S5 is involved in control of translational fidelity.

One of the primary rRNA binding proteins, it binds directly to 16S rRNA where it nucleates assembly of the body of the 30S subunit. Functionally, with S5 and S12 plays an important role in translational accuracy. The sequence is that of Small ribosomal subunit protein uS4 from Burkholderia lata (strain ATCC 17760 / DSM 23089 / LMG 22485 / NCIMB 9086 / R18194 / 383).